The sequence spans 266 residues: Apolipoprotein A-I (266 aa).

Positions 1-18 are cleaved as a signal peptide; it reads MKAVVLTLAVLFLTGSQA. 2 repeat units span residues 67–88 and 89–110. The tract at residues 67 to 266 is 10 X approximate tandem repeats; sequence LKLLDNWDTL…DEATKKLNAQ (200 aa). A Methionine sulfoxide modification is found at methionine 109. A 3; half-length repeat occupies 111-121; sequence KDLEEVKQKVQ. 5 repeat units span residues 122–143, 144–165, 166–187, 188–209, and 210–231. A 9; half-length repeat occupies 232-242; it reads PALEDLRQGLL. Copy 10 of the repeat occupies 243–266; it reads PVLESFKVGLMAIVDEATKKLNAQ.

The protein belongs to the apolipoprotein A1/A4/E family. Homodimer. Interacts with APOA1BP and CLU. Component of a sperm activating protein complex (SPAP), consisting of APOA1, an immunoglobulin heavy chain, an immunoglobulin light chain and albumin. Interacts with NDRG1. Interacts with SCGB3A2. Interacts with NAXE and YJEFN3. Glycosylated. Post-translationally, palmitoylated. In terms of processing, phosphorylation sites are present in the extracellular medium.

It is found in the secreted. Functionally, participates in the reverse transport of cholesterol from tissues to the liver for excretion by promoting cholesterol efflux from tissues and by acting as a cofactor for the lecithin cholesterol acyltransferase (LCAT). As part of the SPAP complex, activates spermatozoa motility. This is Apolipoprotein A-I (APOA1) from Acinonyx jubatus (Cheetah).